The sequence spans 219 residues: Ras-related protein Rab-32A (219 aa).

22–29 (GDIGTGKT) contacts GTP. The Effector region motif lies at 44–52 (YKSTIGVDF). GTP is bound by residues 71–75 (DIAGQ) and 134–137 (NKCD). The segment at 192 to 219 (NQPIEGTIQPGDLNKQPQPTSTGPSCCK) is disordered. Residues 206 to 219 (KQPQPTSTGPSCCK) are compositionally biased toward polar residues. 2 S-geranylgeranyl cysteine lipidation sites follow: Cys-217 and Cys-218.

The protein belongs to the small GTPase superfamily. Rab family.

The polypeptide is Ras-related protein Rab-32A (rab32A) (Dictyostelium discoideum (Social amoeba)).